Reading from the N-terminus, the 292-residue chain is Protein-L-isoaspartate O-methyltransferase (292 aa).

The segment at 1-76 (MTEKKRFPLS…AAAPSSNERA (76 aa)) is disordered. Polar residues predominate over residues 28 to 48 (NRSSTSGKVATPQTATQNASQ). Residue Ser-138 is part of the active site.

It belongs to the methyltransferase superfamily. L-isoaspartyl/D-aspartyl protein methyltransferase family.

Its subcellular location is the cytoplasm. It catalyses the reaction [protein]-L-isoaspartate + S-adenosyl-L-methionine = [protein]-L-isoaspartate alpha-methyl ester + S-adenosyl-L-homocysteine. In terms of biological role, catalyzes the methyl esterification of L-isoaspartyl residues in peptides and proteins that result from spontaneous decomposition of normal L-aspartyl and L-asparaginyl residues. It plays a role in the repair and/or degradation of damaged proteins. In Janthinobacterium sp. (strain Marseille) (Minibacterium massiliensis), this protein is Protein-L-isoaspartate O-methyltransferase.